Consider the following 49-residue polypeptide: uncharacterized protein (49 aa).

This is an uncharacterized protein from Archaeoglobus fulgidus (strain ATCC 49558 / DSM 4304 / JCM 9628 / NBRC 100126 / VC-16).